The sequence spans 35 residues: Beta/delta-theraphotoxin-Pre1a (35 aa).

Disulfide bonds link Cys3-Cys18, Cys10-Cys23, and Cys17-Cys30.

This sequence belongs to the neurotoxin 10 (Hwtx-1) family. In terms of tissue distribution, expressed by the venom gland.

It localises to the secreted. Gating-modifier toxin that both inhibits the peak current of human Nav1.1/SCN1A, rat Nav1.2/SCN2A, human Nav1.6/SCN8A, and human Nav1.7/SCN9A and concurrently inhibits fast inactivation of human Nav1.1 and rat Nav1.3/SCN3A. The relative rank order potency for Nav modulation is Nav1.3 (inactivation EC(50)=45 nM) &gt; Nav1.7 &gt; Nav1.2 &gt; Nav1.1 (inactivation) &gt; Nav1.1 &gt; Nav1.6 &gt; Nav1.3 (IC(50)=8 uM). The DII and DIV S3-S4 loops of Nav channel voltage sensors are important for the interaction of this toxin with Nav channels but cannot account for its unique subtype selectivity. It is the variability of the S1-S2 loops between NaV channels which contributes substantially to the selectivity profile observed for this toxin, particularly with regards to fast inactivation. This toxin may bind the channel in the resting state. The sequence is that of Beta/delta-theraphotoxin-Pre1a from Psalmopoeus reduncus (Costa Rican orangemouth tarantula).